The following is a 553-amino-acid chain: Meiotic expression up-regulated protein 18 (553 aa).

Positions 267–305 are disordered; that stretch reads SNETLCSNDSKHRIARLKNEDNTQKPISKKRKSKKASHK. A compositionally biased stretch (basic and acidic residues) spans 275-289; the sequence is DSKHRIARLKNEDNT. Basic residues predominate over residues 293 to 304; sequence ISKKRKSKKASH.

The polypeptide is Meiotic expression up-regulated protein 18 (meu18) (Schizosaccharomyces pombe (strain 972 / ATCC 24843) (Fission yeast)).